Reading from the N-terminus, the 485-residue chain is Serine/threonine-protein kinase 4 (485 aa).

A Protein kinase domain is found at 30 to 281 (FDVLEKLGEG…ATELLQHPFI (252 aa)). ATP is bound by residues 36-44 (LGEGSYGSV) and Lys59. The active-site Proton acceptor is the Asp149. Thr183 carries the post-translational modification Phosphothreonine; by autocatalysis. A coiled-coil region spans residues 287–313 (ESILRHLINEAQDAKLKRTELKQREVE). The SARAH domain occupies 431–478 (YSFLKDWSVTELQLRLNSLDPMMEQEIEEIHHKYQAKRQPILEAIESK).

The protein belongs to the protein kinase superfamily. STE Ser/Thr protein kinase family. STE20 subfamily. Homodimer; mediated via the coiled-coil region. The cofactor is Mg(2+). Post-translationally, autophosphorylated on Thr-183. Proteolytically cleaved by caspase-3 during apoptosis at Asp-326 resulting in a 37 kDa form. Proteolytic cleavage results in kinase activation and nuclear translocation of the truncated form (MST1/N).

It localises to the cytoplasm. The protein resides in the nucleus. The catalysed reaction is L-seryl-[protein] + ATP = O-phospho-L-seryl-[protein] + ADP + H(+). It catalyses the reaction L-threonyl-[protein] + ATP = O-phospho-L-threonyl-[protein] + ADP + H(+). The C-terminal non-catalytic region inhibits the kinase activity, the enzyme is activated by caspase-cleavage. Homodimerization and autophosphorylation of Thr-183 is also required for full activation. Stress-activated, pro-apoptotic kinase which, following caspase-cleavage, enters the nucleus and induces chromatin condensation followed by internucleosomal DNA fragmentation. Key component of the Hippo signaling pathway which plays a pivotal role in organ size control and tumor suppression by restricting proliferation and promoting apoptosis. The core of this pathway is composed of a kinase cascade wherein stk3/mst2 and stk4/mst1, in complex with its regulatory protein sav1, phosphorylates and activates lats1/2 in complex with its regulatory protein mob1, which in turn phosphorylates and inactivates yap1 oncoprotein and wwtr1/taz. Phosphorylation of yap1 by lats2 inhibits its translocation into the nucleus to regulate cellular genes important for cell proliferation, cell death, and cell migration. Phosphorylates 'Ser-14' of histone H2B (H2BS14ph) during apoptosis. This chain is Serine/threonine-protein kinase 4 (stk4), found in Xenopus tropicalis (Western clawed frog).